We begin with the raw amino-acid sequence, 92 residues long: UPF0250 protein VC0395_A0469/VC395_0960 (92 aa).

This sequence belongs to the UPF0250 family.

The protein is UPF0250 protein VC0395_A0469/VC395_0960 of Vibrio cholerae serotype O1 (strain ATCC 39541 / Classical Ogawa 395 / O395).